The sequence spans 633 residues: MPLTPTVQGFQWTLRGPDVETSPFGAPRAASHGVGRHQELRDPTVPGPTSSATNVSMVVSAGPWSGEKAEMNILEINKKSRPQLAENKQQFRNLKQKCLVTQVAYFLANRQNNYDYEDCKDLIKSMLRDERLLTEEKLAEELGQAEELRQYKVLVHSQERELTQLREKLQEGRDASRSLNQHLQALLTPDEPDNSQGRDLREQLAEGCRLAQHLVQKLSPENDDDEDEDVKVEEAEKVQELYAPREVQKAEEKEVPEDSLEECAITCSNSHHPCESNQPYGNTRITFEEDQVDSTLIDSSSHDEWLDAVCIIPENESDHEQEEEKGPVSPRNLQESEEEEAPQESWDEGDWTLSIPPDMSASYQSDRSTFHSVEEQQVGLALDIGRHWCDQVKKEDQEATSPRLSRELLDEKEPEVLQDSLDRFYSTPFEYLELPDLCQPYRSDFYSLQEQHLGLALDLDRMKKDQEEEEDQGPPCPRLSRELPEVVEPEDLQDSLDRWYSTPFSYPELPDSCQPYGSCFYSLEEEHVGFSLDVDEIEKYQEGEEDQKPPCPRLNEVLMEAEEPEVLQDSLDRCYSTTSTYFQLHASFQQYRSAFYSFEEQDVSLALDVDNRFFTLTVIRHHLAFQMGVIFPH.

The disordered stretch occupies residues 15 to 52; sequence RGPDVETSPFGAPRAASHGVGRHQELRDPTVPGPTSSA. Residues 127-186 are a coiled coil; it reads LRDERLLTEEKLAEELGQAEELRQYKVLVHSQERELTQLREKLQEGRDASRSLNQHLQAL. Olduvai domains lie at 221-313, 314-402, 405-460, 461-552, and 555-633; these read ENDD…CIIP, ENES…ATSP, SREL…LDLD, RMKK…PPCP, and NEVL…IFPH. Residues 316–326 show a composition bias toward basic and acidic residues; that stretch reads ESDHEQEEEKG. The disordered stretch occupies residues 316–370; sequence ESDHEQEEEKGPVSPRNLQESEEEEAPQESWDEGDWTLSIPPDMSASYQSDRSTF. The span at 335-350 shows a compositional bias: acidic residues; the sequence is ESEEEEAPQESWDEGD. Positions 463-484 are disordered; sequence KKDQEEEEDQGPPCPRLSRELP.

It belongs to the NBPF family. Expressed in testis and fetal heart, as well as in non small cell lung carcinoma and neuroblastoma cell line.

The protein localises to the cytoplasm. The polypeptide is NBPF family member NBPF3 (Homo sapiens (Human)).